The chain runs to 314 residues: Methionyl-tRNA formyltransferase (314 aa).

Serine 111 to proline 114 is a binding site for (6S)-5,6,7,8-tetrahydrofolate.

This sequence belongs to the Fmt family.

It catalyses the reaction L-methionyl-tRNA(fMet) + (6R)-10-formyltetrahydrofolate = N-formyl-L-methionyl-tRNA(fMet) + (6S)-5,6,7,8-tetrahydrofolate + H(+). Its function is as follows. Attaches a formyl group to the free amino group of methionyl-tRNA(fMet). The formyl group appears to play a dual role in the initiator identity of N-formylmethionyl-tRNA by promoting its recognition by IF2 and preventing the misappropriation of this tRNA by the elongation apparatus. This chain is Methionyl-tRNA formyltransferase, found in Chlorobium chlorochromatii (strain CaD3).